Reading from the N-terminus, the 538-residue chain is Carboxypeptidase 2 (538 aa).

The N-terminal stretch at 1-21 (MVAYRFLTLISLGLGSHCVSA) is a signal peptide. The N-linked (GlcNAc...) asparagine glycan is linked to asparagine 46. The interval 53–76 (PAFTSPGTVSRGFSDGTSGPTRDE) is disordered. The Peptidase M14 domain maps to 71-351 (GPTRDETMEG…VMAKSVLQTA (281 aa)). The Zn(2+) site is built by histidine 136, glutamate 139, and histidine 224. The active-site Proton donor/acceptor is the glutamate 322. Asparagine 393 and asparagine 459 each carry an N-linked (GlcNAc...) asparagine glycan.

Belongs to the peptidase M14 family. It depends on Zn(2+) as a cofactor.

It is found in the secreted. Extracellular metalloprotease that contributes to pathogenicity. In Trichophyton rubrum (Athlete's foot fungus), this protein is Carboxypeptidase 2 (MCPB).